A 305-amino-acid chain; its full sequence is uncharacterized protein (305 aa).

An ABC transporter domain is found at 5 to 233; sequence LELKNVTKNI…ENDTYFFQVE (229 aa). 37–44 provides a ligand contact to ATP; it reads GPNGAGKT.

The protein belongs to the ABC transporter superfamily.

This is an uncharacterized protein from Bacillus subtilis (strain 168).